The primary structure comprises 336 residues: Holliday junction branch migration complex subunit RuvB (336 aa).

The tract at residues 1–175 (MEKYSFESVQ…FGMSFRLQFY (175 aa)) is large ATPase domain (RuvB-L). Residues L14, R15, G56, K59, T60, T61, 122-124 (EDF), R165, Y175, and R212 contribute to the ATP site. T60 contacts Mg(2+). A small ATPAse domain (RuvB-S) region spans residues 176-253 (EPKELSAIVI…CVRYALNELG (78 aa)). Positions 256–336 (ELGFDELDLR…IPFLEQKGLF (81 aa)) are head domain (RuvB-H). Residues R310 and R315 each contribute to the DNA site.

The protein belongs to the RuvB family. In terms of assembly, homohexamer. Forms an RuvA(8)-RuvB(12)-Holliday junction (HJ) complex. HJ DNA is sandwiched between 2 RuvA tetramers; dsDNA enters through RuvA and exits via RuvB. An RuvB hexamer assembles on each DNA strand where it exits the tetramer. Each RuvB hexamer is contacted by two RuvA subunits (via domain III) on 2 adjacent RuvB subunits; this complex drives branch migration. In the full resolvosome a probable DNA-RuvA(4)-RuvB(12)-RuvC(2) complex forms which resolves the HJ.

Its subcellular location is the cytoplasm. It catalyses the reaction ATP + H2O = ADP + phosphate + H(+). Its function is as follows. The RuvA-RuvB-RuvC complex processes Holliday junction (HJ) DNA during genetic recombination and DNA repair, while the RuvA-RuvB complex plays an important role in the rescue of blocked DNA replication forks via replication fork reversal (RFR). RuvA specifically binds to HJ cruciform DNA, conferring on it an open structure. The RuvB hexamer acts as an ATP-dependent pump, pulling dsDNA into and through the RuvAB complex. RuvB forms 2 homohexamers on either side of HJ DNA bound by 1 or 2 RuvA tetramers; 4 subunits per hexamer contact DNA at a time. Coordinated motions by a converter formed by DNA-disengaged RuvB subunits stimulates ATP hydrolysis and nucleotide exchange. Immobilization of the converter enables RuvB to convert the ATP-contained energy into a lever motion, pulling 2 nucleotides of DNA out of the RuvA tetramer per ATP hydrolyzed, thus driving DNA branch migration. The RuvB motors rotate together with the DNA substrate, which together with the progressing nucleotide cycle form the mechanistic basis for DNA recombination by continuous HJ branch migration. Branch migration allows RuvC to scan DNA until it finds its consensus sequence, where it cleaves and resolves cruciform DNA. The protein is Holliday junction branch migration complex subunit RuvB of Helicobacter hepaticus (strain ATCC 51449 / 3B1).